A 114-amino-acid polypeptide reads, in one-letter code: Large ribosomal subunit protein bL20c (114 aa).

Belongs to the bacterial ribosomal protein bL20 family.

Its subcellular location is the plastid. The protein localises to the chloroplast. Binds directly to 23S ribosomal RNA and is necessary for the in vitro assembly process of the 50S ribosomal subunit. It is not involved in the protein synthesizing functions of that subunit. The polypeptide is Large ribosomal subunit protein bL20c (Psilotum nudum (Whisk fern)).